A 95-amino-acid polypeptide reads, in one-letter code: Aspartyl/glutamyl-tRNA(Asn/Gln) amidotransferase subunit C (95 aa).

It belongs to the GatC family. As to quaternary structure, heterotrimer of A, B and C subunits.

The enzyme catalyses L-glutamyl-tRNA(Gln) + L-glutamine + ATP + H2O = L-glutaminyl-tRNA(Gln) + L-glutamate + ADP + phosphate + H(+). It carries out the reaction L-aspartyl-tRNA(Asn) + L-glutamine + ATP + H2O = L-asparaginyl-tRNA(Asn) + L-glutamate + ADP + phosphate + 2 H(+). Allows the formation of correctly charged Asn-tRNA(Asn) or Gln-tRNA(Gln) through the transamidation of misacylated Asp-tRNA(Asn) or Glu-tRNA(Gln) in organisms which lack either or both of asparaginyl-tRNA or glutaminyl-tRNA synthetases. The reaction takes place in the presence of glutamine and ATP through an activated phospho-Asp-tRNA(Asn) or phospho-Glu-tRNA(Gln). The protein is Aspartyl/glutamyl-tRNA(Asn/Gln) amidotransferase subunit C of Pseudomonas fluorescens (strain SBW25).